Consider the following 617-residue polypeptide: MKTFTLPASVLFCFLLLIRGLGAAPPGRSDVYPPPLGSEHNGQVAEDAVSRPKDDSVPEVRAARNSEPQDQGELFQGVDPRALAAVLLQALDRPASPPAVPAGSQQGTPEEAAEALLTESVRSQTHSLPASEIQASAVAPPRPQTQDNDPEADDRSEELEALASLLQELRDFSPSNAKRQQETAAAETETRTHTLTRVNLESPGPERVWRASWGEFQARVPERAPLPPSVPSQFQARMSENVPLPETHQFGEGVSSPKTHLGETLTPLSKAYQSLSAPFPKVRRLEGSFLGGSEAGERLLQQGLAQVEAGRRQAEATRQAAAQEERLADLASDLLLQYLLQGGARQRDLGGRGLQETQQERENEREEEAEQERRGGGEDEVGEEDEEAAEAEAEAEEAERARQNALLFAEEEDGEAGAEDKRSQEEAPGHRRKDAEGTEEGGEEDDDDEEMDPQTIDSLIELSTKLHLPADDVVSIIEEVEEKRKRKKNAPPEPVPPPRAAPAPTHVRSPQPPPPAPARDELPDWNEVLPPWDREEDEVFPPGPYHPFPNYIRPRTLQPPASSRRRHFHHALPPARHHPDLEAQARRAQEEADAEERRLQEQEELENYIEHVLLHRP.

The first 23 residues, 1–23, serve as a signal peptide directing secretion; sequence MKTFTLPASVLFCFLLLIRGLGA. Disordered regions lie at residues 29–75, 94–113, 121–157, and 169–192; these read SDVY…GELF, PASP…EEAA, VRSQ…DRSE, and LRDF…ETRT. The span at 48-64 shows a compositional bias: basic and acidic residues; it reads AVSRPKDDSVPEVRAAR. Over residues 148-157 the composition is skewed to acidic residues; it reads NDPEADDRSE. Pyrrolidone carboxylic acid is present on Gln-180. Residues 182-192 show a composition bias toward low complexity; sequence ETAAAETETRT. Gln-313 is subject to Pyrrolidone carboxylic acid. Residues 348–603 are disordered; that stretch reads DLGGRGLQET…AEERRLQEQE (256 aa). Acidic residues predominate over residues 378-397; it reads EDEVGEEDEEAAEAEAEAEE. A compositionally biased stretch (basic and acidic residues) spans 418 to 436; it reads AEDKRSQEEAPGHRRKDAE. At Ser-423 the chain carries Phosphoserine. The span at 437-452 shows a compositional bias: acidic residues; sequence GTEEGGEEDDDDEEMD. Residues 491–501 show a composition bias toward pro residues; that stretch reads PPEPVPPPRAA. Over residues 577–601 the composition is skewed to basic and acidic residues; it reads HHPDLEAQARRAQEEADAEERRLQE.

In terms of assembly, interacts with HSPA8 on cell membrane. Interacts with C3AR1. Interacts with C1QBP. Multiple peptides are derived from VGF, with activities in synaptic plasticity, antidepression, penile erection, autonomic activation, and increases in energy expenditure. As to expression, central and peripheral nervous systems, synthesized exclusively in neuronal and neuroendocrine cells. VGF and several of the derived peptides are present in the brain.

The protein localises to the secreted. The protein resides in the cytoplasmic vesicle. It is found in the secretory vesicle. Functionally, secreted polyprotein that is packaged and proteolytically processed by prohormone convertases PCSK1 and PCSK2 in a cell-type-specific manner. VGF and peptides derived from its processing play many roles in neurogenesis and neuroplasticity associated with learning, memory, depression and chronic pain. In terms of biological role, plays a role in the control of body fluid homeostasis by regulating vasopressin release. Suppresses presynaptic glutamatergic neurons connected to vasopressin neurons. Plays a role in the control of body fluid homeostasis by regulating vasopressin release. Activates GABAergic interneurons which are inhibitory neurons of the nervous system and thereby suppresses presynaptic glutamatergic neurons. Also stimulates feeding behavior in an orexin-dependent manner in the hypothalamus. Functions as a positive regulator for the activation of orexin neurons resulting in elevated gastric acid secretion and gastric emptying. Its function is as follows. Secreted multifunctional neuropeptide that binds to different cell receptors and thereby plays multiple physiological roles including modulation of energy expenditure, pain, response to stress, gastric regulation, glucose homeostasis as well as lipolysis. Activates the G-protein-coupled receptor C3AR1 via a folding-upon-binding mechanism leading to enhanced lipolysis in adipocytes. Interacts with C1QBP receptor in macrophages and microglia causing increased levels of intracellular calcium and hypersensitivity. Functionally, plays a role in the regulation of memory formation and depression-related behaviors potentially by influencing synaptic plasticity and neurogenesis. Induces acute and transient activation of the NTRK2/TRKB receptor and subsequent CREB phosphorylation. Also induces insulin secretion in insulinoma cells by increasing intracellular calcium mobilization. The polypeptide is Neurosecretory protein VGF (Vgf) (Rattus norvegicus (Rat)).